The following is a 425-amino-acid chain: MKPMHIAMALLSAAMFFVLAGVFMGVQLELDGTKLVVDTASDVRWQWVFIGTAVVFFFQLLRPAFQKGLKSVSGPKFILPAIDGSTVKQKLFLVALLVLAVAWPFMVSRGTVDIATLTMIYIILGLGLNVVVGLSGLLVLGYGGFYAIGAYTFALLNHYYGLGFWTCLPIAGLMAAAAGFLLGFPVLRLRGDYLAIVTLGFGEIVRILLLNNTEITGGPNGISQIPKPTLFGLEFSRTAREGGWDTFSNFFGLKYDPSDRVIFLYLVALLLVVLSLFVINRLLRMPLGRAWEALREDEIACRSLGLSPRRIKLTAFTISAAFAGFAGTLFAARQGFVSPESFTFAESAFVLAIVVLGGMGSQFAVILAAILLVVSRELMRDFNEYSMLMLGGLMVLMMIWRPQGLLPMTRPQLKLKNGAAKGEQA.

11 helical membrane passes run Ile6–Val26, Trp45–Phe65, Phe92–Val112, Ile120–Leu140, Phe145–Trp165, Cys167–Leu187, Gly191–Asn211, Arg260–Asn280, Ile311–Ala331, Ile353–Val373, and Met387–Pro407.

This sequence belongs to the binding-protein-dependent transport system permease family. LivHM subfamily.

The protein resides in the cell inner membrane. Its function is as follows. Part of the binding-protein-dependent transport system for branched-chain amino acids. Probably responsible for the translocation of the substrates across the membrane. This Escherichia coli (strain K12) protein is High-affinity branched-chain amino acid transport system permease protein LivM (livM).